A 393-amino-acid polypeptide reads, in one-letter code: uncharacterized protein (393 aa).

ATP is bound at residue Gly-67–Ser-74.

This is an uncharacterized protein from Mycobacterium tuberculosis (strain CDC 1551 / Oshkosh).